The sequence spans 258 residues: Snake venom serine proteinase 5 (258 aa).

The N-terminal stretch at 1–18 is a signal peptide; sequence MVLIRVLANLLILQLSYA. A propeptide spanning residues 19–24 is cleaved from the precursor; it reads QKSSEL. Positions 25–249 constitute a Peptidase S1 domain; the sequence is VVGGDECNIN…YNDWIQSIIA (225 aa). Intrachain disulfides connect cysteine 31–cysteine 163, cysteine 50–cysteine 66, cysteine 98–cysteine 256, cysteine 142–cysteine 210, cysteine 174–cysteine 189, and cysteine 200–cysteine 225. An N-linked (GlcNAc...) asparagine glycan is attached at asparagine 44. Catalysis depends on charge relay system residues histidine 65 and aspartate 110. Residue serine 204 is the Charge relay system of the active site.

This sequence belongs to the peptidase S1 family. Snake venom subfamily. Monomer. In terms of tissue distribution, expressed by the venom gland.

Its subcellular location is the secreted. Functionally, snake venom serine protease that may act in the hemostasis system of the prey. The chain is Snake venom serine proteinase 5 from Crotalus adamanteus (Eastern diamondback rattlesnake).